Here is a 118-residue protein sequence, read N- to C-terminus: FFQLAVFVVILFNINLLSASAGSKGSSAPQSSGDSVVAEFCDTNCTMKKDGKWTECNGDCFCVHVGNETVGRCMRLDGDYDYTSSKTTRRNKKTRNGLCRLDRNRTTVDYPERNTREP.

A signal peptide spans Phe-1 to Ala-19. 3 disulfides stabilise this stretch: Cys-41/Cys-60, Cys-45/Cys-62, and Cys-56/Cys-73. A glycan (N-linked (GlcNAc...) asparagine) is linked at Asn-44. Asn-67 and Asn-104 each carry an N-linked (GlcNAc...) asparagine glycan.

The protein resides in the secreted. Its function is as follows. Salivary chemokine-binding protein which binds to host chemokines CXCL1, CXCL2, CXCL3, CXCL4, CXCL5, CXCL6, CXCL10, CXCL11 and CXCL13. This Ixodes ricinus (Common tick) protein is Evasin P1080.